A 21-amino-acid polypeptide reads, in one-letter code: C-phycocyanin alpha subunit (21 aa).

The protein belongs to the phycobiliprotein family. Heterodimer of an alpha and a beta subunit, which further assembles into trimers and the trimers into hexamers. In terms of processing, contains one covalently linked bilin chromophore.

The protein localises to the cellular thylakoid membrane. Its function is as follows. Light-harvesting photosynthetic bile pigment-protein from the phycobiliprotein complex (phycobilisome, PBS). Phycocyanin is the major phycobiliprotein in the PBS rod. The chain is C-phycocyanin alpha subunit from Anabaena sp. (strain L31).